Consider the following 460-residue polypeptide: Transcription factor AP-2-beta (460 aa).

Residue K21 forms a Glycyl lysine isopeptide (Lys-Gly) (interchain with G-Cter in SUMO) linkage. The interval 30–139 is disordered; the sequence is HDGVPSHSSR…PQLSGLDPRR (110 aa). Residues 35-51 show a composition bias toward polar residues; sequence SHSSRLSQLGSVSQGPY. Residues 121–132 show a composition bias toward low complexity; that stretch reads LLPQPRAALPQL. A Phosphoserine; by PKA modification is found at S258. Positions 435–460 are disordered; the sequence is NTTTNRHTSGEGPGSKTGDKEEKHRK. The span at 451–460 shows a compositional bias: basic and acidic residues; it reads TGDKEEKHRK.

This sequence belongs to the AP-2 family. As to quaternary structure, binds DNA as a dimer. Can form homodimers or heterodimers with other AP-2 family members. Interacts with CITED4. Interacts with UBE2I. Interacts with KCTD1; this interaction represses transcription activation. Interacts with CITED2 (via C-terminus); the interaction stimulates TFAP2B-transcriptional activity. Post-translationally, sumoylated on Lys-21; which inhibits transcriptional activity.

It localises to the nucleus. Sequence-specific DNA-binding protein that interacts with inducible viral and cellular enhancer elements to regulate transcription of selected genes. AP-2 factors bind to the consensus sequence 5'-GCCNNNGGC-3' and activate genes involved in a large spectrum of important biological functions including proper eye, face, body wall, limb and neural tube development. They also suppress a number of genes including MCAM/MUC18, C/EBP alpha and MYC. AP-2-beta appears to be required for normal face and limb development and for proper terminal differentiation and function of renal tubular epithelia. This is Transcription factor AP-2-beta (TFAP2B) from Canis lupus familiaris (Dog).